Consider the following 361-residue polypeptide: Porphobilinogen deaminase (361 aa).

Serine 2 is subject to N-acetylserine. Serine 69 carries the post-translational modification Phosphoserine. At lysine 74 the chain carries N6-acetyllysine. Position 147 is a phosphoserine (serine 147). Cysteine 261 is modified (S-(dipyrrolylmethanemethyl)cysteine).

The protein belongs to the HMBS family. In terms of assembly, monomer. The cofactor is dipyrromethane.

The protein resides in the cytoplasm. Its subcellular location is the cytosol. It carries out the reaction 4 porphobilinogen + H2O = hydroxymethylbilane + 4 NH4(+). It functions in the pathway porphyrin-containing compound metabolism; protoporphyrin-IX biosynthesis; coproporphyrinogen-III from 5-aminolevulinate: step 2/4. Functionally, as part of the heme biosynthetic pathway, catalyzes the sequential polymerization of four molecules of porphobilinogen to form hydroxymethylbilane, also known as preuroporphyrinogen. Catalysis begins with the assembly of the dipyrromethane cofactor by the apoenzyme from two molecules of porphobilinogen or from preuroporphyrinogen. The covalently linked cofactor acts as a primer, around which the tetrapyrrole product is assembled. In the last step of catalysis, the product, preuroporphyrinogen, is released, leaving the cofactor bound to the holodeaminase intact. The polypeptide is Porphobilinogen deaminase (Hmbs) (Rattus norvegicus (Rat)).